A 627-amino-acid polypeptide reads, in one-letter code: RNA interference defective protein 10 (627 aa).

3 disordered regions span residues 1-31 (MSNH…VRQN), 467-487 (QRDT…HDQY), and 523-589 (SSVR…SEDY). Basic and acidic residues-rich tracts occupy residues 7–16 (NFRDYQREGI), 467–478 (QRDTDEQYDVHQ), and 526–537 (REPEHPSARSRD).

Belongs to the maelstrom family. In terms of assembly, interacts with rde-11 (via RING-type zinc finger domain). Interacts with ergo-1.

Its function is as follows. In complex with rde-11, required in the endogenous and exogenous siRNA pathway for biogenesis and accumulation of secondary small interfering RNA (siRNA) intermediates, such as 22G-siRNAs derived from ergo-1 targets. The chain is RNA interference defective protein 10 from Caenorhabditis elegans.